We begin with the raw amino-acid sequence, 273 residues long: 2,3,4,5-tetrahydropyridine-2,6-dicarboxylate N-succinyltransferase (273 aa).

Positions 104 and 141 each coordinate substrate.

It belongs to the transferase hexapeptide repeat family. Homotrimer.

It localises to the cytoplasm. It carries out the reaction (S)-2,3,4,5-tetrahydrodipicolinate + succinyl-CoA + H2O = (S)-2-succinylamino-6-oxoheptanedioate + CoA. Its pathway is amino-acid biosynthesis; L-lysine biosynthesis via DAP pathway; LL-2,6-diaminopimelate from (S)-tetrahydrodipicolinate (succinylase route): step 1/3. This chain is 2,3,4,5-tetrahydropyridine-2,6-dicarboxylate N-succinyltransferase, found in Psychrobacter cryohalolentis (strain ATCC BAA-1226 / DSM 17306 / VKM B-2378 / K5).